The primary structure comprises 404 residues: Transcription factor sem-2 (404 aa).

The segment at residues Ile93–Lys161 is a DNA-binding region (HMG box). Disordered stretches follow at residues Pro158 to Asn218 and His321 to Gly359. Residues Gln177–Ala199 are compositionally biased toward low complexity. Composition is skewed to polar residues over residues Thr207–Asn218 and Ala347–Gly359.

It localises to the nucleus. Functionally, probable transcription factor required for embryogenesis, vulval development and cell fate specification of the postembryonic mesoderm (also known as the M lineage). Specifically, required for the specification of sex myoblast cells and their development into the muscles that are necessary for egg-laying. In addition, may be involved in RME GABAergic motor neuron progenitor cell fate specification. This chain is Transcription factor sem-2, found in Caenorhabditis elegans.